Consider the following 425-residue polypeptide: UPF0761 membrane protein XCV0968 (425 aa).

6 consecutive transmembrane segments (helical) span residues 48–68 (VFALVPLAIVVFGVLSAFPAF), 105–125 (FTVAGMVALVASLLITLHSIE), 154–174 (GTMLAAASMAMAAYVFALPLF), 182–202 (LAEFAWRLAPMAVEFVCIVLI), 216–236 (ALPGALLAVILMEIVKWGFGF), and 250–270 (ALSALPILLLWIYLSWVSVLL).

This sequence belongs to the UPF0761 family.

Its subcellular location is the cell inner membrane. The sequence is that of UPF0761 membrane protein XCV0968 from Xanthomonas euvesicatoria pv. vesicatoria (strain 85-10) (Xanthomonas campestris pv. vesicatoria).